We begin with the raw amino-acid sequence, 247 residues long: ATP synthase subunit a, chloroplastic (247 aa).

Transmembrane regions (helical) follow at residues 38–58 (QVLI…VIAV), 95–115 (VPFI…GALL), 134–154 (INTT…AGLS), 199–219 (LVVV…VMFL), and 220–240 (GLFT…AYIG).

Belongs to the ATPase A chain family. As to quaternary structure, F-type ATPases have 2 components, CF(1) - the catalytic core - and CF(0) - the membrane proton channel. CF(1) has five subunits: alpha(3), beta(3), gamma(1), delta(1), epsilon(1). CF(0) has four main subunits: a, b, b' and c.

It localises to the plastid. The protein localises to the chloroplast thylakoid membrane. Its function is as follows. Key component of the proton channel; it plays a direct role in the translocation of protons across the membrane. This is ATP synthase subunit a, chloroplastic from Agrostis stolonifera (Creeping bentgrass).